A 234-amino-acid chain; its full sequence is 7-cyano-7-deazaguanine synthase (234 aa).

An ATP-binding site is contributed by 15–25; it reads LSGGLDSSTCL. Zn(2+)-binding residues include Cys199, Cys208, Cys211, and Cys214.

This sequence belongs to the QueC family. It depends on Zn(2+) as a cofactor.

The enzyme catalyses 7-carboxy-7-deazaguanine + NH4(+) + ATP = 7-cyano-7-deazaguanine + ADP + phosphate + H2O + H(+). It participates in purine metabolism; 7-cyano-7-deazaguanine biosynthesis. Functionally, catalyzes the ATP-dependent conversion of 7-carboxy-7-deazaguanine (CDG) to 7-cyano-7-deazaguanine (preQ(0)). This Anaeromyxobacter dehalogenans (strain 2CP-C) protein is 7-cyano-7-deazaguanine synthase.